Here is a 221-residue protein sequence, read N- to C-terminus: ATP phosphoribosyltransferase (221 aa).

This sequence belongs to the ATP phosphoribosyltransferase family. Short subfamily. As to quaternary structure, heteromultimer composed of HisG and HisZ subunits.

The protein resides in the cytoplasm. It carries out the reaction 1-(5-phospho-beta-D-ribosyl)-ATP + diphosphate = 5-phospho-alpha-D-ribose 1-diphosphate + ATP. Its pathway is amino-acid biosynthesis; L-histidine biosynthesis; L-histidine from 5-phospho-alpha-D-ribose 1-diphosphate: step 1/9. Catalyzes the condensation of ATP and 5-phosphoribose 1-diphosphate to form N'-(5'-phosphoribosyl)-ATP (PR-ATP). Has a crucial role in the pathway because the rate of histidine biosynthesis seems to be controlled primarily by regulation of HisG enzymatic activity. This chain is ATP phosphoribosyltransferase, found in Carboxydothermus hydrogenoformans (strain ATCC BAA-161 / DSM 6008 / Z-2901).